Reading from the N-terminus, the 481-residue chain is Ras-GEF domain-containing family member 1A (481 aa).

The N-terminal Ras-GEF domain occupies 41 to 170 (QDGHLISGSL…AIAQMTQSLL (130 aa)). The 248-residue stretch at 214–461 (DPLVLAQQLT…FVASFESEGP (248 aa)) folds into the Ras-GEF domain.

Detected in brain and spinal cord. Highly expressed in a number of intrahepatic cholangiocarcinoma tissue biopsies.

Its function is as follows. Guanine nucleotide exchange factor (GEF) with specificity for RAP2A, KRAS, HRAS, and NRAS (in vitro). Plays a role in cell migration. The protein is Ras-GEF domain-containing family member 1A (RASGEF1A) of Homo sapiens (Human).